Reading from the N-terminus, the 501-residue chain is Probable sucrose utilization protein SUC1 (501 aa).

The zn(2)-C6 fungal-type DNA-binding region spans 13–39 (CDSCSFRKVKCDMKTPCSRCVLNNLKC).

It belongs to the MAL13 family.

The protein localises to the nucleus. In terms of biological role, affects sucrose utilization and alpha-glucosidase activity. Probable transcriptional activator. The protein is Probable sucrose utilization protein SUC1 (SUC1) of Candida albicans (strain SC5314 / ATCC MYA-2876) (Yeast).